The chain runs to 288 residues: Acetyl-coenzyme A carboxylase carboxyl transferase subunit beta (288 aa).

Positions 34 to 288 (LFAKCPACKH…HLVAFHGGGQ (255 aa)) constitute a CoA carboxyltransferase N-terminal domain. Positions 38, 41, 56, and 59 each coordinate Zn(2+). The segment at 38-59 (CPACKHMIYKKDLGLAKICPTC) adopts a C4-type zinc-finger fold.

It belongs to the AccD/PCCB family. In terms of assembly, acetyl-CoA carboxylase is a heterohexamer composed of biotin carboxyl carrier protein (AccB), biotin carboxylase (AccC) and two subunits each of ACCase subunit alpha (AccA) and ACCase subunit beta (AccD). Requires Zn(2+) as cofactor.

It localises to the cytoplasm. It carries out the reaction N(6)-carboxybiotinyl-L-lysyl-[protein] + acetyl-CoA = N(6)-biotinyl-L-lysyl-[protein] + malonyl-CoA. The protein operates within lipid metabolism; malonyl-CoA biosynthesis; malonyl-CoA from acetyl-CoA: step 1/1. Component of the acetyl coenzyme A carboxylase (ACC) complex. Biotin carboxylase (BC) catalyzes the carboxylation of biotin on its carrier protein (BCCP) and then the CO(2) group is transferred by the transcarboxylase to acetyl-CoA to form malonyl-CoA. The chain is Acetyl-coenzyme A carboxylase carboxyl transferase subunit beta from Streptococcus pyogenes serotype M4 (strain MGAS10750).